A 284-amino-acid chain; its full sequence is Bifunctional protein FolD (284 aa).

Residues 166–168 and I232 contribute to the NADP(+) site; that span reads GAS.

Belongs to the tetrahydrofolate dehydrogenase/cyclohydrolase family. In terms of assembly, homodimer.

It catalyses the reaction (6R)-5,10-methylene-5,6,7,8-tetrahydrofolate + NADP(+) = (6R)-5,10-methenyltetrahydrofolate + NADPH. The enzyme catalyses (6R)-5,10-methenyltetrahydrofolate + H2O = (6R)-10-formyltetrahydrofolate + H(+). The protein operates within one-carbon metabolism; tetrahydrofolate interconversion. Its function is as follows. Catalyzes the oxidation of 5,10-methylenetetrahydrofolate to 5,10-methenyltetrahydrofolate and then the hydrolysis of 5,10-methenyltetrahydrofolate to 10-formyltetrahydrofolate. This chain is Bifunctional protein FolD, found in Shewanella frigidimarina (strain NCIMB 400).